The sequence spans 537 residues: Tripeptidyl aminopeptidase (537 aa).

Residues 1–36 (MRKSSIRRRATAFGTAGALVTATLIAGAVSAPAASA) form the signal peptide. The propeptide occupies 37 to 39 (APA). Positions 119-497 (GALIYNPGGP…SRLITERDAG (379 aa)) constitute an AB hydrolase-1 domain. The Nucleophile role is filled by serine 245. Residue aspartate 470 is part of the active site. Histidine 499 serves as the catalytic Proton donor.

This sequence belongs to the peptidase S33 family.

The protein localises to the secreted. Cleaves tripeptides from the N-termini of proteins. Does not cleave mono- or dipeptides, or N-terminally blocked peptides. The protein is Tripeptidyl aminopeptidase of Streptomyces lividans.